The sequence spans 171 residues: Nudix hydrolase DR_0079 (171 aa).

The Nudix hydrolase domain maps to 32-162 (ERVRVVNAFL…EAAKGDLAEL (131 aa)). Positions 69 to 91 (GGAVQSGETYEEAFRREAREELN) match the Nudix box motif. 2 residues coordinate Mg(2+): Glu85 and Glu89.

It belongs to the Nudix hydrolase family. Monomer. Mg(2+) serves as cofactor.

Its activity is regulated as follows. Inhibited by zinc, calcium or copper ions. Its function is as follows. Hydrolase that converts various nucleotide triphosphates (NTPs) to the corresponding nucleotide monophosphates and diphosphate, and nucleotide diphosphates to nucleotide monophosphates and inorganic phosphate. Has a marked preference for cytosine ribonucleoside 5'-diphosphate (CDP) and cytosine ribonucleoside 5'-triphosphate (CTP). Has lower activity towards the deoxyribose nucleotides dCDP and dCTP, and towards dGDP, TDP and UDP. The chain is Nudix hydrolase DR_0079 from Deinococcus radiodurans (strain ATCC 13939 / DSM 20539 / JCM 16871 / CCUG 27074 / LMG 4051 / NBRC 15346 / NCIMB 9279 / VKM B-1422 / R1).